The following is a 736-amino-acid chain: Serine/threonine-protein kinase BRSK2 (736 aa).

Residues 19 to 270 (YRLEKTLGKG…LEHIQKHIWY (252 aa)) enclose the Protein kinase domain. ATP contacts are provided by residues 25-33 (LGKGQTGLV) and Lys48. The active-site Proton acceptor is Asp141. At Thr174 the chain carries Phosphothreonine; by LKB1. At Thr260 the chain carries Phosphothreonine; by PKA. Position 294 is a phosphoserine (Ser294). The UBA domain maps to 297–339 (DIDPDVLDSMHSLGCFRDRNKLLQDLLSEEENQEKMIYFLLLD). Over residues 345 to 366 (PSQEDEDLPPRNEIDPPRKRVD) the composition is skewed to basic and acidic residues. 2 disordered regions span residues 345 to 475 (PSQE…GVPW) and 493 to 513 (HRRK…PESS). A phosphoserine mark is found at Ser367, Ser382, Ser393, Ser412, Ala416, Ser423, and Ser427. Low complexity predominate over residues 410–428 (SRSISGASSGLSTSPLSSP). Residues 431–445 (TPHPSPRGSPLPTPK) are compositionally biased toward pro residues. Ser455 is subject to Phosphoserine. 3 positions are modified to phosphothreonine: Thr459, Thr463, and Thr509. A phosphoserine mark is found at Ser512, Ser513, and Ser520. The KEN box signature appears at 603–605 (KEN). Positions 681 to 736 (KNGQAAQAPSTPAKRSAHGPLGDSAAAGPGPGGDAEYPTGKDTAKMGPPTARREQP) are disordered. The segment covering 699–708 (GPLGDSAAAG) has biased composition (low complexity).

The protein belongs to the protein kinase superfamily. CAMK Ser/Thr protein kinase family. SNF1 subfamily. Interacts with FZR1, a regulatory subunit of the APC ubiquitin ligase complex. Interacts with COPS5. Interacts with PAK1. It depends on Mg(2+) as a cofactor. Phosphorylated at Thr-174 by STK11/LKB1 in complex with STE20-related adapter-alpha (STRADA) pseudo kinase and CAB39. Not phosphorylated at Thr-174 by CaMKK2. In contrast, it is phosphorylated and activated by CaMKK1. May be inactivated via dephosphorylation of Thr-174 by PP2C. Phosphorylated at Thr-260 by PKA. Phosphorylation at Thr-260 by PKA was not observed in another study, but this may reflect differences in the experimental approach. Phosphorylation at Thr-260 seems to play a role in the regulation of insulin secretion. In terms of processing, polyubiquitinated by the APC complex in conjunction with FZR1, leading to its proteasomal degradation. Targeted for proteasomal degradation by interaction with COPS5. BRSK2 levels change during the cell cycle. BRSK2 levels are low at the G1/S boundary and gradually increase as cells progress into G2 phase. BRSK2 levels decrease rapidly at the end of mitosis. As to expression, detected in pancreas islets (at protein level).

The protein resides in the cytoplasm. It is found in the cytoskeleton. The protein localises to the microtubule organizing center. Its subcellular location is the centrosome. It localises to the perinuclear region. The protein resides in the endoplasmic reticulum. The catalysed reaction is L-seryl-[protein] + ATP = O-phospho-L-seryl-[protein] + ADP + H(+). It catalyses the reaction L-threonyl-[protein] + ATP = O-phospho-L-threonyl-[protein] + ADP + H(+). It carries out the reaction L-seryl-[tau protein] + ATP = O-phospho-L-seryl-[tau protein] + ADP + H(+). The enzyme catalyses L-threonyl-[tau protein] + ATP = O-phospho-L-threonyl-[tau protein] + ADP + H(+). Its activity is regulated as follows. Activated by phosphorylation on Thr-174 by STK11/LKB1. Its function is as follows. Serine/threonine-protein kinase that plays a key role in polarization of neurons and axonogenesis, cell cycle progress and insulin secretion. Phosphorylates CDK16, CDC25C, MAPT/TAU, PAK1 and WEE1. Following phosphorylation and activation by STK11/LKB1, acts as a key regulator of polarization of cortical neurons, probably by mediating phosphorylation of microtubule-associated proteins such as MAPT/TAU at 'Thr-529' and 'Ser-579'. Also regulates neuron polarization by mediating phosphorylation of WEE1 at 'Ser-642' in postmitotic neurons, leading to down-regulate WEE1 activity in polarized neurons. Plays a role in the regulation of the mitotic cell cycle progress and the onset of mitosis. Plays a role in the regulation of insulin secretion in response to elevated glucose levels, probably via phosphorylation of CDK16 and PAK1. While BRSK2 phosphorylated at Thr-174 can inhibit insulin secretion, BRSK2 phosphorylated at Thr-260 can promote insulin secretion. Regulates reorganization of the actin cytoskeleton. May play a role in the apoptotic response triggered by endoplasmic reticulum (ER) stress. The sequence is that of Serine/threonine-protein kinase BRSK2 (BRSK2) from Homo sapiens (Human).